A 430-amino-acid polypeptide reads, in one-letter code: Lipoyl synthase, mitochondrial (430 aa).

Residues 1-37 constitute a mitochondrion transit peptide; the sequence is MAASTGKLRTLFSAHSSLSARPSSALPALRLTILRSY. The segment covering 40–56 has biased composition (low complexity); the sequence is TTPPDSSISDPSNSSTT. The tract at residues 40-63 is disordered; it reads TTPPDSSISDPSNSSTTVKRPPTA. Residues Cys141, Cys146, Cys152, Cys172, Cys176, Cys179, and Ser387 each coordinate [4Fe-4S] cluster. The Radical SAM core domain maps to 155–376; the sequence is GSSKSAATAT…KERALEMGFL (222 aa).

Belongs to the radical SAM superfamily. Lipoyl synthase family. The cofactor is [4Fe-4S] cluster.

The protein localises to the mitochondrion. The enzyme catalyses [[Fe-S] cluster scaffold protein carrying a second [4Fe-4S](2+) cluster] + N(6)-octanoyl-L-lysyl-[protein] + 2 oxidized [2Fe-2S]-[ferredoxin] + 2 S-adenosyl-L-methionine + 4 H(+) = [[Fe-S] cluster scaffold protein] + N(6)-[(R)-dihydrolipoyl]-L-lysyl-[protein] + 4 Fe(3+) + 2 hydrogen sulfide + 2 5'-deoxyadenosine + 2 L-methionine + 2 reduced [2Fe-2S]-[ferredoxin]. The protein operates within protein modification; protein lipoylation via endogenous pathway; protein N(6)-(lipoyl)lysine from octanoyl-[acyl-carrier-protein]: step 2/2. Functionally, catalyzes the radical-mediated insertion of two sulfur atoms into the C-6 and C-8 positions of the octanoyl moiety bound to the lipoyl domains of lipoate-dependent enzymes, thereby converting the octanoylated domains into lipoylated derivatives. This Ajellomyces dermatitidis (strain ER-3 / ATCC MYA-2586) (Blastomyces dermatitidis) protein is Lipoyl synthase, mitochondrial.